The sequence spans 397 residues: uncharacterized protein (397 aa).

Transmembrane regions (helical) follow at residues 9–29 (NAVL…GFLT), 38–58 (LLAS…GAQL), 85–105 (FLAA…VGGA), 112–132 (IFGI…ILIF), 148–168 (MGFI…PPVV), 182–202 (PIAI…FAGA), 226–246 (AILI…GVVS), 271–291 (VLFG…AAYT), 310–330 (WIIA…KPAA), 331–351 (VLVF…ALIL), and 365–385 (HPVF…ILSG).

Belongs to the NRAMP family.

It is found in the cell membrane. This is an uncharacterized protein from Haemophilus influenzae (strain ATCC 51907 / DSM 11121 / KW20 / Rd).